We begin with the raw amino-acid sequence, 879 residues long: Alanine--tRNA ligase (879 aa).

Positions 565, 569, 674, and 678 each coordinate Zn(2+).

The protein belongs to the class-II aminoacyl-tRNA synthetase family. The cofactor is Zn(2+).

It localises to the cytoplasm. The catalysed reaction is tRNA(Ala) + L-alanine + ATP = L-alanyl-tRNA(Ala) + AMP + diphosphate. Functionally, catalyzes the attachment of alanine to tRNA(Ala) in a two-step reaction: alanine is first activated by ATP to form Ala-AMP and then transferred to the acceptor end of tRNA(Ala). Also edits incorrectly charged Ser-tRNA(Ala) and Gly-tRNA(Ala) via its editing domain. In Gluconobacter oxydans (strain 621H) (Gluconobacter suboxydans), this protein is Alanine--tRNA ligase.